The sequence spans 196 residues: SAGA-associated factor 11 homolog (196 aa).

Residues 1–22 (MSAANMPTTTGAQGSGNQVPTT) form a disordered region. The SGF11-type zinc finger occupies 106-127 (CTCPNCDRLVAAARFAPHLEKC). Residues 144–196 (TKEGATSAHLHSAGNTGGTDDEDDVDWSSDKRRKKSNQNSRNNGSKKNNGKSF) form a disordered region. Phosphoserine is present on S172. A compositionally biased stretch (low complexity) spans 180-196 (NQNSRNNGSKKNNGKSF).

It belongs to the SGF11 family. As to quaternary structure, component of some SAGA transcription coactivator-HAT complexes, at least composed of Ada2b, not/nonstop, Pcaf/Gcn5, Sgf11 and Spt3. Within the SAGA complex, Sgf11, e(y)2, and not/nonstop form an additional subcomplex of SAGA called the DUB module (deubiquitination module). Interacts directly with not/nonstop. Interacts with the AMEX complex component xmas-2. Interacts with Cbp80; important for promoter recruitment of Sgf11 that is not associated with the DUB module.

The protein localises to the nucleus. It is found in the nucleoplasm. The protein resides in the cytoplasm. Functionally, component of the transcription regulatory histone acetylation (HAT) complex SAGA, a multiprotein complex that activates transcription by remodeling chromatin and mediating histone acetylation and deubiquitination. Within the SAGA complex, participates in a subcomplex that specifically deubiquitinates histone H2B. The SAGA complex is recruited to specific gene promoters by activators, where it is required for transcription. Required for nuclear receptor-mediated transactivation. Binds independently on SAGA to promoters in an RNA-dependent manner. Binds to mRNA and is essential for total mRNA export from the nucleus. Required to counteract heterochromatin silencing. Controls the development of neuronal connectivity in visual system by being required for accurate axon targeting in the optic lobe. Required for expression of ecdysone-induced genes such as br/broad. The sequence is that of SAGA-associated factor 11 homolog from Drosophila erecta (Fruit fly).